The primary structure comprises 238 residues: Pyridoxine 5'-phosphate synthase (238 aa).

3-amino-2-oxopropyl phosphate contacts are provided by asparagine 7 and arginine 18. Histidine 43 acts as the Proton acceptor in catalysis. Positions 45 and 50 each coordinate 1-deoxy-D-xylulose 5-phosphate. The active-site Proton acceptor is glutamate 70. Threonine 100 contributes to the 1-deoxy-D-xylulose 5-phosphate binding site. Residue histidine 190 is the Proton donor of the active site. Residues aspartate 191 and 213-214 (GH) contribute to the 3-amino-2-oxopropyl phosphate site.

Belongs to the PNP synthase family. As to quaternary structure, homooctamer; tetramer of dimers.

Its subcellular location is the cytoplasm. It carries out the reaction 3-amino-2-oxopropyl phosphate + 1-deoxy-D-xylulose 5-phosphate = pyridoxine 5'-phosphate + phosphate + 2 H2O + H(+). It participates in cofactor biosynthesis; pyridoxine 5'-phosphate biosynthesis; pyridoxine 5'-phosphate from D-erythrose 4-phosphate: step 5/5. In terms of biological role, catalyzes the complicated ring closure reaction between the two acyclic compounds 1-deoxy-D-xylulose-5-phosphate (DXP) and 3-amino-2-oxopropyl phosphate (1-amino-acetone-3-phosphate or AAP) to form pyridoxine 5'-phosphate (PNP) and inorganic phosphate. The chain is Pyridoxine 5'-phosphate synthase from Parabacteroides distasonis (strain ATCC 8503 / DSM 20701 / CIP 104284 / JCM 5825 / NCTC 11152).